Reading from the N-terminus, the 276-residue chain is NH(3)-dependent NAD(+) synthetase (276 aa).

43–50 (GISGGVDS) is an ATP binding site. Residue Asp-49 participates in Mg(2+) binding. Position 146 (Arg-146) interacts with deamido-NAD(+). Position 166 (Thr-166) interacts with ATP. Residue Glu-171 participates in Mg(2+) binding. Positions 179 and 186 each coordinate deamido-NAD(+). ATP is bound by residues Lys-195 and Thr-217. 266 to 267 (HK) is a deamido-NAD(+) binding site.

The protein belongs to the NAD synthetase family. As to quaternary structure, homodimer.

The enzyme catalyses deamido-NAD(+) + NH4(+) + ATP = AMP + diphosphate + NAD(+) + H(+). It participates in cofactor biosynthesis; NAD(+) biosynthesis; NAD(+) from deamido-NAD(+) (ammonia route): step 1/1. Functionally, catalyzes the ATP-dependent amidation of deamido-NAD to form NAD. Uses ammonia as a nitrogen source. This is NH(3)-dependent NAD(+) synthetase from Vibrio cholerae serotype O1 (strain ATCC 39541 / Classical Ogawa 395 / O395).